The following is a 245-amino-acid chain: MFELTGRKALVTGASGAIGGAIARVLHAQGAIVGLHGTQIEKLETLATELGDRVKLFPANLANRDEVKALGQRAEADLEGVDILVNNAGITKDGLFLHMADPDWDIVLEVNLTAMFRLTREITQQMIRRRNGRIINVTSVAGAIGNPGQTNYCASKAGMIGFSKSLAQEIATRNITVNCVAPGFIESAMTDKLNHKQKEKIMVAIPIHRMGTGTEVASAVAYLASDHAAYVTGQTIHVNGGMAMI.

Residue 11 to 35 (VTGASGAIGGAIARVLHAQGAIVGL) participates in NAD(+) binding. Residue serine 139 participates in substrate binding. The Proton acceptor role is filled by tyrosine 152.

It belongs to the short-chain dehydrogenases/reductases (SDR) family.

Proposed to modify Nod factor fatty acyl chain. In Rhizobium meliloti (strain 1021) (Ensifer meliloti), this protein is Nodulation protein G (nodG).